Consider the following 108-residue polypeptide: MLKSNLEVDNRFSLIGKVADFPKRNKSPSGIDHCLFYLEHRSNKKEAGFTRQAWCKIAIQISGNQLIEKTQSITVGQQLLVVGFVTSHRSSNGLNQLVLHAEQIEFIE.

An SSB domain is found at 8 to 108 (VDNRFSLIGK…LHAEQIEFIE (101 aa)).

This sequence belongs to the PriB family. As to quaternary structure, homodimer. Interacts with PriA and DnaT. Component of the replication restart primosome. Primosome assembly occurs via a 'hand-off' mechanism. PriA binds to replication forks, subsequently PriB then DnaT bind; DnaT then displaces ssDNA to generate the helicase loading substrate.

Its function is as follows. Involved in the restart of stalled replication forks, which reloads the replicative helicase on sites other than the origin of replication; the PriA-PriB pathway is the major replication restart pathway. During primosome assembly it facilitates complex formation between PriA and DnaT on DNA; stabilizes PriA on DNA. Stimulates the DNA unwinding activity of PriA helicase. The sequence is that of Replication restart protein PriB from Histophilus somni (strain 129Pt) (Haemophilus somnus).